The primary structure comprises 178 residues: Nicotinamide-nucleotide adenylyltransferase (178 aa).

This sequence belongs to the archaeal NMN adenylyltransferase family.

It localises to the cytoplasm. The enzyme catalyses beta-nicotinamide D-ribonucleotide + ATP + H(+) = diphosphate + NAD(+). Its pathway is cofactor biosynthesis; NAD(+) biosynthesis; NAD(+) from nicotinamide D-ribonucleotide: step 1/1. The sequence is that of Nicotinamide-nucleotide adenylyltransferase from Caldivirga maquilingensis (strain ATCC 700844 / DSM 13496 / JCM 10307 / IC-167).